We begin with the raw amino-acid sequence, 51 residues long: Putative inactivation escape 1 protein (51 aa).

In terms of tissue distribution, highly expressed in pancreas, heart and liver followed by brain, placenta, lung, skeletal muscle and kidney. Mostly expressed in females.

The protein is Putative inactivation escape 1 protein (INE1) of Homo sapiens (Human).